We begin with the raw amino-acid sequence, 58 residues long: uncharacterized protein (58 aa).

4Fe-4S ferredoxin-type domains follow at residues 2 to 27 (GIKI…IKTY) and 28 to 57 (GVAI…VDTS). The [4Fe-4S] cluster site is built by C9, C12, C15, C19, C37, C40, C43, and C47.

The cofactor is [4Fe-4S] cluster.

In terms of biological role, ferredoxins are iron-sulfur proteins that transfer electrons probably in the CO-dehydrogenase complex. This is an uncharacterized protein from Methanocaldococcus jannaschii (strain ATCC 43067 / DSM 2661 / JAL-1 / JCM 10045 / NBRC 100440) (Methanococcus jannaschii).